Consider the following 1625-residue polypeptide: Probable cation-transporting ATPase I (1625 aa).

The next 8 membrane-spanning stretches (helical) occupy residues valine 148–alanine 168, leucine 177–valine 197, leucine 358–isoleucine 378, alanine 637–valine 657, tryptophan 673–alanine 693, isoleucine 778–valine 798, leucine 968–leucine 988, and alanine 997–alanine 1017. Residue aspartate 1053 is the 4-aspartylphosphate intermediate of the active site. 2 residues coordinate Mg(2+): aspartate 1340 and aspartate 1344. 3 helical membrane-spanning segments follow: residues isoleucine 1401–alanine 1421, leucine 1432–phenylalanine 1452, and valine 1547–isoleucine 1567.

The protein belongs to the cation transport ATPase (P-type) (TC 3.A.3) family.

The protein localises to the cell membrane. It carries out the reaction ATP + H2O = ADP + phosphate + H(+). The protein is Probable cation-transporting ATPase I (ctpI) of Mycobacterium tuberculosis (strain CDC 1551 / Oshkosh).